Here is a 128-residue protein sequence, read N- to C-terminus: MNIRATRVGEQMKKELSDIIGRKLKDPRIGFVTVTDVRVTGDLQQAKVYISVFGDDEQRENTLKALEKAKGFIRSEIGQRIRLRKTPEILFEIDETIEYGSRIERLIRQISDEDGRDSEEVNDEPKNG.

Belongs to the RbfA family. As to quaternary structure, monomer. Binds 30S ribosomal subunits, but not 50S ribosomal subunits or 70S ribosomes.

It is found in the cytoplasm. One of several proteins that assist in the late maturation steps of the functional core of the 30S ribosomal subunit. Associates with free 30S ribosomal subunits (but not with 30S subunits that are part of 70S ribosomes or polysomes). Required for efficient processing of 16S rRNA. May interact with the 5'-terminal helix region of 16S rRNA. In Geobacillus thermodenitrificans (strain NG80-2), this protein is Ribosome-binding factor A.